The primary structure comprises 124 residues: Small ribosomal subunit protein bS6 (124 aa).

Positions 96-124 (ETGPSPMMKEVQREEAKKAAAAQPAEAQA) are disordered. Positions 114–124 (AAAAQPAEAQA) are enriched in low complexity.

Belongs to the bacterial ribosomal protein bS6 family.

Binds together with bS18 to 16S ribosomal RNA. The sequence is that of Small ribosomal subunit protein bS6 from Burkholderia orbicola (strain MC0-3).